We begin with the raw amino-acid sequence, 359 residues long: MNILTPVAERLPSREEAEEALAVLRRWATHTPASDVAALAPEAPALVYPDLSRAYPRTFTVDEAYKASLPDLQNGPASLIVGAKAVIQHVGISNFRLPIRYHTRDNGDLQLETSVTGTVSLEAEKKGINMSRIMRSFYAHAEQAFSFEVIERALEDYKRDLESFDARIQMRFSFPVKVPSLRSGLTGWQYYDIALELVDRGGVRKEIMHLDFVYSSTCPCSLELSEHARRERGQLATPHSQRSVARISVEVRQGKCLWFEDLLDLVRSAVPTETQVMVKREDEQAFAELNAANPIFVEDAARSFCQALQSDPRIGDFRVVASHQESLHSHDAVSVLTEGPTFAAESLDPRLFSSLYHVG.

It belongs to the GTP cyclohydrolase IV family.

The enzyme catalyses GTP + H2O = 7,8-dihydroneopterin 3'-triphosphate + formate + H(+). It participates in cofactor biosynthesis; 7,8-dihydroneopterin triphosphate biosynthesis; 7,8-dihydroneopterin triphosphate from GTP: step 1/1. Functionally, converts GTP to 7,8-dihydroneopterin triphosphate. This is GTP cyclohydrolase FolE2 from Cereibacter sphaeroides (strain ATCC 17029 / ATH 2.4.9) (Rhodobacter sphaeroides).